The sequence spans 209 residues: GTP-binding protein RHO1 (209 aa).

Ser2 bears the N-acetylserine mark. Residue 17–24 (GDGACGKT) coordinates GTP. Positions 39–47 (YVPTVFENY) match the Effector region motif. GTP contacts are provided by residues 64 to 68 (DTAGQ) and 122 to 125 (CKVD). The disordered stretch occupies residues 187 to 209 (KSKTNGKAKKNTTEKKKKKCVLL). A compositionally biased stretch (basic residues) spans 190-209 (TNGKAKKNTTEKKKKKCVLL). Cys206 bears the Cysteine methyl ester mark. A lipid anchor (S-geranylgeranyl cysteine) is attached at Cys206. Positions 207-209 (VLL) are cleaved as a propeptide — removed in mature form.

It belongs to the small GTPase superfamily. Rho family. Interacts with BEM4; the interaction is direct. Interacts with SEC3; the interaction is direct. Interacts with the GAP BAG7. Interacts with the GAP LRG1. Interacts with the GAP SAC7. Interacts with the GAP RDI1. Interacts with the 1,3-beta-glucan synthase component FKS1. Interacts with the protein kinase PKC1. Interacts with the G protein beta subunit STE4. Interacts with SKN7. Interacts with TUS1. Interacts with BNI1.

It is found in the cell membrane. Its subcellular location is the endosome membrane. The protein resides in the peroxisome membrane. It carries out the reaction GTP + H2O = GDP + phosphate + H(+). With respect to regulation, alternates between an inactive form bound to GDP and an active form bound to GTP. Activated by the guanine nucleotide-exchange factors (GEFs) ROM1, ROM2 and TUS1, and inactivated by GTPase-activating proteins (GAPs) BAG7, BEM2, LRG1, and SAC7, and the Rho GDP-dissociation inhibitor RDI1. The different GAPs regulate RHO1 in a target-specific manner. Its function is as follows. Acts as a central regulator in the cell wall integrity signaling pathway, which is regulated by the cell cycle and in response to various types of cell wall stress. Integrates signals from different cell surface sensors, and activates a set of effectors, regulating processes including beta-glucan synthesis at the site of wall remodeling, gene expression related to cell wall biogenesis, organization of the actin cytoskeleton, and protein- and secretory vesicle-targeting to the growth site. Activates the protein kinase C (PKC1) MAP kinase cascade, the beta-1,3-glucan synthase (FKS1), the formin BNI1, the exocyst component SEC3 and the transcription factor SKN7. This chain is GTP-binding protein RHO1 (RHO1), found in Saccharomyces cerevisiae (strain ATCC 204508 / S288c) (Baker's yeast).